Reading from the N-terminus, the 496-residue chain is Ammonium transporter 1 member 2 (496 aa).

11 helical membrane-spanning segments follow: residues 39–59, 74–94, 120–140, 148–168, 192–212, 236–256, 274–296, 307–327, 331–351, 360–380, and 412–432; these read LLFSAYLVFAMQLGFAMLCAG, VLDAAAGALFYYLFGFAFAFG, FFLFQWAFAIAAAGITSGSIA, YLIYSAFLTGFVYPVVSHWIW, FAGSGVVHMVGGVAGLWGALI, LVVLGSFLLWFGWYGFNPGSF, SAVGRTAVTTTLAGSTAALTTLF, VIDVCNGLLGGFAAITAGCSV, WAAIICGFVSAWVLIGLNALA, LEAAQLHGGCGAWGVIFTALF, and IVVILVIAAWVSFTMAPLFLV.

It belongs to the ammonia transporter channel (TC 1.A.11.2) family. Expressed in exodermis, sclerenchyma, endodermis and pericycle cells of primary root tips.

It is found in the membrane. Ammonium transporter probably involved in ammonium uptake from the soil and ammonium uptake and retrieval in the vascular system. The chain is Ammonium transporter 1 member 2 (AMT1-2) from Oryza sativa subsp. japonica (Rice).